The primary structure comprises 502 residues: MEEYQGYFELDGYQQHDFLYPLIFREYIYALAHDHGLNRSVLLDNVGYDNKSSLLIIKRLISRMYQQNHLIISANDSNQNKFFGYNKNLYSQIISEGFAVIVEIPFSLRSVSSLETTETEIVKSYNLRSLHSLFPFLEDKFPHLNYVSDVLIPYPIHLEILVQTLRYWVKDPSSLHLLRLFLHEYYNYNWNSLITPNKFIKSNPRLFLLLYNSHVCEYESIFLFLRNQSSHLRLTSYGIFFEQIHFYEKIKYPVENDFTVAILWFFKDPFMHYVRYQGKSILASKDTPLLMNKWKYYLVNLWQCHSYVWSQPGRIYINQLSKHSLYFLGYFSSMRPNLSVVRSQMLENSFIMDNAMKKLDTLVPIIPLIVSLAKVKFCNALGHPISKSTWADSSDFDIIDRFVRICRNISHYYSGSSRKKSLYRIKYILRLSCVKTLARKHKSTVRTFLKRFGSKLLEEFFTEEEQIRSLIFPRASYTLNKFYRGRIWYFDIFYINDLVNHE.

This sequence belongs to the intron maturase 2 family. MatK subfamily.

It localises to the plastid. It is found in the chloroplast. Its function is as follows. Usually encoded in the trnK tRNA gene intron. Probably assists in splicing its own and other chloroplast group II introns. The polypeptide is Maturase K (Spiraea cantoniensis (Reeve's meadowsweet)).